We begin with the raw amino-acid sequence, 89 residues long: MSIAAERKAEVIKTSANKPGDTGSPEVQVAILSERIANLTAHFKIHTKDNHSRRGLLKLVSTRRSLLDYVKKKDEARYKALLEKHGIRR.

Positions 1–11 (MSIAAERKAEV) are enriched in basic and acidic residues. A disordered region spans residues 1–25 (MSIAAERKAEVIKTSANKPGDTGSP).

This sequence belongs to the universal ribosomal protein uS15 family. As to quaternary structure, part of the 30S ribosomal subunit. Forms a bridge to the 50S subunit in the 70S ribosome, contacting the 23S rRNA.

Functionally, one of the primary rRNA binding proteins, it binds directly to 16S rRNA where it helps nucleate assembly of the platform of the 30S subunit by binding and bridging several RNA helices of the 16S rRNA. In terms of biological role, forms an intersubunit bridge (bridge B4) with the 23S rRNA of the 50S subunit in the ribosome. This Nitrobacter winogradskyi (strain ATCC 25391 / DSM 10237 / CIP 104748 / NCIMB 11846 / Nb-255) protein is Small ribosomal subunit protein uS15.